We begin with the raw amino-acid sequence, 279 residues long: Thymidylate synthase (279 aa).

R141–R142 provides a ligand contact to dUMP. The Nucleophile role is filled by C161. DUMP is bound by residues R181–D184, N192, and H222–Y224. Residue D184 coordinates (6R)-5,10-methylene-5,6,7,8-tetrahydrofolate. A278 lines the (6R)-5,10-methylene-5,6,7,8-tetrahydrofolate pocket.

It belongs to the thymidylate synthase family. Bacterial-type ThyA subfamily. Homodimer.

It is found in the cytoplasm. The catalysed reaction is dUMP + (6R)-5,10-methylene-5,6,7,8-tetrahydrofolate = 7,8-dihydrofolate + dTMP. Its pathway is pyrimidine metabolism; dTTP biosynthesis. Catalyzes the reductive methylation of 2'-deoxyuridine-5'-monophosphate (dUMP) to 2'-deoxythymidine-5'-monophosphate (dTMP) while utilizing 5,10-methylenetetrahydrofolate (mTHF) as the methyl donor and reductant in the reaction, yielding dihydrofolate (DHF) as a by-product. This enzymatic reaction provides an intracellular de novo source of dTMP, an essential precursor for DNA biosynthesis. This is Thymidylate synthase from Bacillus subtilis subsp. natto.